The chain runs to 248 residues: Probable transcriptional regulatory protein RHOS4_22610 (248 aa).

Residues M1–R21 form a disordered region.

It belongs to the TACO1 family.

It is found in the cytoplasm. The protein is Probable transcriptional regulatory protein RHOS4_22610 of Cereibacter sphaeroides (strain ATCC 17023 / DSM 158 / JCM 6121 / CCUG 31486 / LMG 2827 / NBRC 12203 / NCIMB 8253 / ATH 2.4.1.) (Rhodobacter sphaeroides).